Consider the following 216-residue polypeptide: LHFPL tetraspan subfamily member 3 protein (216 aa).

4 consecutive transmembrane segments (helical) span residues isoleucine 22 to valine 42, phenylalanine 96 to phenylalanine 116, isoleucine 126 to proline 146, and isoleucine 177 to glycine 197.

Belongs to the LHFP family.

The protein resides in the membrane. The chain is LHFPL tetraspan subfamily member 3 protein from Danio rerio (Zebrafish).